An 868-amino-acid chain; its full sequence is Protein translocase subunit SecA (868 aa).

Residues glutamine 87, 105–109 (GEGKT), and aspartate 500 contribute to the ATP site. Zn(2+) is bound by residues cysteine 849, cysteine 851, cysteine 860, and histidine 861.

The protein belongs to the SecA family. Monomer and homodimer. Part of the essential Sec protein translocation apparatus which comprises SecA, SecYEG and auxiliary proteins SecDF-YajC and YidC. It depends on Zn(2+) as a cofactor.

Its subcellular location is the cell membrane. It localises to the cytoplasm. It carries out the reaction ATP + H2O + cellular proteinSide 1 = ADP + phosphate + cellular proteinSide 2.. Part of the Sec protein translocase complex. Interacts with the SecYEG preprotein conducting channel. Has a central role in coupling the hydrolysis of ATP to the transfer of proteins into and across the cell membrane, serving both as a receptor for the preprotein-SecB complex and as an ATP-driven molecular motor driving the stepwise translocation of polypeptide chains across the membrane. The polypeptide is Protein translocase subunit SecA (Wolbachia pipientis wMel).